A 558-amino-acid chain; its full sequence is Nucleoprotein (558 aa).

The segment at 54 to 237 is binding site for the cap structure m7GTP; that stretch reads MRKEKRDDKD…ITEQQSSINI (184 aa). Asp382 and Glu384 together coordinate Mg(2+). Positions 382 and 384 each coordinate Mn(2+). Residues Glu392, Cys499, His502, and Cys518 each contribute to the Zn(2+) site. Asp522 is a Mg(2+) binding site. Asp522 lines the Mn(2+) pocket.

This sequence belongs to the arenaviridae nucleocapsid protein family. As to quaternary structure, homomultimerizes to form the nucleocapsid. Binds to viral genomic RNA. Interacts with glycoprotein G2. Interacts with protein Z; this interaction probably directs the encapsidated genome to budding sites. Interacts with protein L; this interaction does not interfere with Z-L interaction. Interacts with host IKBKE (via Protein kinase domain); the interaction inhibits IKBKE kinase activity.

Its subcellular location is the virion. It localises to the host cytoplasm. In terms of biological role, encapsidates the genome, protecting it from nucleases. The encapsidated genomic RNA is termed the nucleocapsid (NC). Serves as template for viral transcription and replication. The increased presence of protein N in host cell does not seem to trigger the switch from transcription to replication as observed in other negative strain RNA viruses. Through the interaction with host IKBKE, strongly inhibits the phosphorylation and nuclear translocation of host IRF3, a protein involved in interferon activation pathway, leading to the inhibition of interferon-beta and IRF3-dependent promoters activation. Also encodes a functional 3'-5' exoribonuclease that degrades preferentially dsRNA substrates and thereby participates in the suppression of interferon induction. The polypeptide is Nucleoprotein (Lymphocytic choriomeningitis virus (strain Armstrong) (LCMV)).